Consider the following 96-residue polypeptide: MKTTLIAAAIVALSGLAAPALAYDGTKCKAAGNCWEPKPGFPEKIAGSKYDPKHDPKELNKQADSIKQMEERNKKRVENFKKTGKFEYDVAKISAN.

A signal peptide spans 1–22 (MKTTLIAAAIVALSGLAAPALA). Residues cysteine 28 and cysteine 34 are joined by a disulfide bond. Residues 45 to 75 (IAGSKYDPKHDPKELNKQADSIKQMEERNKK) are disordered. The segment covering 50–61 (YDPKHDPKELNK) has biased composition (basic and acidic residues).

It belongs to the methanol dehydrogenase subunit 2 family. In terms of assembly, heterotetramer composed of 2 alpha and 2 beta subunits.

The protein resides in the periplasm. The catalysed reaction is 2 Fe(III)-[cytochrome cL] + a primary alcohol = 2 Fe(II)-[cytochrome cL] + an aldehyde + 2 H(+). In terms of biological role, catalyzes the oxidation of primary alcohols including methanol. This Methylorubrum extorquens (strain ATCC 14718 / DSM 1338 / JCM 2805 / NCIMB 9133 / AM1) (Methylobacterium extorquens) protein is Methanol dehydrogenase [cytochrome c] subunit 2 (moxI).